A 444-amino-acid polypeptide reads, in one-letter code: Transposase for insertion sequence element IS1557 (444 aa).

The disordered stretch occupies residues 273–292 (PKWGRGRPGKNAAPRPGRER).

Belongs to the transposase 12 family.

In Mycobacterium tuberculosis (strain CDC 1551 / Oshkosh), this protein is Transposase for insertion sequence element IS1557.